Here is a 285-residue protein sequence, read N- to C-terminus: 2-dehydro-3-deoxyphosphooctonate aldolase (285 aa).

Belongs to the KdsA family.

The protein resides in the cytoplasm. The catalysed reaction is D-arabinose 5-phosphate + phosphoenolpyruvate + H2O = 3-deoxy-alpha-D-manno-2-octulosonate-8-phosphate + phosphate. The protein operates within carbohydrate biosynthesis; 3-deoxy-D-manno-octulosonate biosynthesis; 3-deoxy-D-manno-octulosonate from D-ribulose 5-phosphate: step 2/3. Its pathway is bacterial outer membrane biogenesis; lipopolysaccharide biosynthesis. The sequence is that of 2-dehydro-3-deoxyphosphooctonate aldolase from Verminephrobacter eiseniae (strain EF01-2).